A 264-amino-acid chain; its full sequence is 4-oxalocrotonate decarboxylase (264 aa).

The protein belongs to the hydratase/decarboxylase family.

The enzyme catalyses (3E)-2-oxohex-3-enedioate + H(+) = 2-oxopent-4-enoate + CO2. It functions in the pathway aromatic compound metabolism; benzoate degradation via hydroxylation. The protein is 4-oxalocrotonate decarboxylase (dmpH) of Pseudomonas sp. (strain CF600).